Here is a 459-residue protein sequence, read N- to C-terminus: Exodeoxyribonuclease 7 large subunit (459 aa).

The protein belongs to the XseA family. In terms of assembly, heterooligomer composed of large and small subunits.

The protein resides in the cytoplasm. The catalysed reaction is Exonucleolytic cleavage in either 5'- to 3'- or 3'- to 5'-direction to yield nucleoside 5'-phosphates.. Its function is as follows. Bidirectionally degrades single-stranded DNA into large acid-insoluble oligonucleotides, which are then degraded further into small acid-soluble oligonucleotides. This chain is Exodeoxyribonuclease 7 large subunit, found in Pseudomonas aeruginosa (strain ATCC 15692 / DSM 22644 / CIP 104116 / JCM 14847 / LMG 12228 / 1C / PRS 101 / PAO1).